Here is a 203-residue protein sequence, read N- to C-terminus: Histidine biosynthesis bifunctional protein HisIE (203 aa).

The segment at 1 to 114 is phosphoribosyl-AMP cyclohydrolase; sequence MLTEQQRREL…FGDASHQWLF (114 aa). The tract at residues 115–203 is phosphoribosyl-ATP pyrophosphohydrolase; that stretch reads LYQLEQLLAE…VIDNLRKRHQ (89 aa).

It in the N-terminal section; belongs to the PRA-CH family. The protein in the C-terminal section; belongs to the PRA-PH family.

It is found in the cytoplasm. The catalysed reaction is 1-(5-phospho-beta-D-ribosyl)-ATP + H2O = 1-(5-phospho-beta-D-ribosyl)-5'-AMP + diphosphate + H(+). It catalyses the reaction 1-(5-phospho-beta-D-ribosyl)-5'-AMP + H2O = 1-(5-phospho-beta-D-ribosyl)-5-[(5-phospho-beta-D-ribosylamino)methylideneamino]imidazole-4-carboxamide. It participates in amino-acid biosynthesis; L-histidine biosynthesis; L-histidine from 5-phospho-alpha-D-ribose 1-diphosphate: step 2/9. Its pathway is amino-acid biosynthesis; L-histidine biosynthesis; L-histidine from 5-phospho-alpha-D-ribose 1-diphosphate: step 3/9. The protein is Histidine biosynthesis bifunctional protein HisIE (hisI) of Salmonella typhimurium (strain LT2 / SGSC1412 / ATCC 700720).